Consider the following 48-residue polypeptide: uncharacterized protein (48 aa).

The interval Met-1 to Ser-30 is disordered.

This is an uncharacterized protein from Bacillus subtilis (strain 168).